The sequence spans 563 residues: GTPase Obg (563 aa).

An Obg domain is found at 2–168 (SDFVDRVTVH…RDVILELKSI (167 aa)). The region spanning 169-349 (ADVALVGFPS…LNFALSALVH (181 aa)) is the OBG-type G domain. Residues 175–182 (GFPSAGKS), 200–204 (FTTLV), 221–224 (DVPG), 301–304 (NKID), and 330–332 (STA) contribute to the GTP site. Mg(2+)-binding residues include S182 and T202. The region spanning 383-469 (DEGGSALEFT…ARMVEFDWDP (87 aa)) is the OCT domain. The tract at residues 529-563 (RKAGHWADPTVDDDRHDETSLFGHGESSEDGETEE) is disordered.

The protein belongs to the TRAFAC class OBG-HflX-like GTPase superfamily. OBG GTPase family. Monomer. Mg(2+) serves as cofactor.

Its subcellular location is the cytoplasm. In terms of biological role, an essential GTPase which binds GTP, GDP and possibly (p)ppGpp with moderate affinity, with high nucleotide exchange rates and a fairly low GTP hydrolysis rate. Plays a role in control of the cell cycle, stress response, ribosome biogenesis and in those bacteria that undergo differentiation, in morphogenesis control. The polypeptide is GTPase Obg (Bifidobacterium longum (strain DJO10A)).